The sequence spans 465 residues: Protein CitXG (465 aa).

The segment at 1–182 (MQHFFTTFST…QSLAQNHDFA (182 aa)) is apo-citrate lyase phosphoribosyl-dephospho-CoA transferase. Positions 183 to 465 (EHIGEQVYLA…TIFFLSFRGN (283 aa)) are 2-(5''-triphosphoribosyl)-3'-dephosphocoenzyme-A synthase.

This sequence in the N-terminal section; belongs to the CitX family. It in the C-terminal section; belongs to the CitG/MdcB family.

It catalyses the reaction apo-[citrate lyase ACP] + 2'-(5''-triphospho-alpha-D-ribosyl)-3'-dephospho-CoA = holo-[citrate lyase ACP] + diphosphate. The enzyme catalyses 3'-dephospho-CoA + ATP = 2'-(5''-triphospho-alpha-D-ribosyl)-3'-dephospho-CoA + adenine. In terms of biological role, bifunctional enzyme that catalyzes formation of 2-(5''-triphosphoribosyl)-3'-dephosphocoenzyme-A, and then the transfer of this prosthetic group precursor to the apo-acyl carrier protein (gamma chain) of the citrate lyase to yield the holo-acyl carrier protein. This chain is Protein CitXG (citXG), found in Haemophilus influenzae (strain ATCC 51907 / DSM 11121 / KW20 / Rd).